The following is a 228-amino-acid chain: Urease accessory protein UreF (228 aa).

It belongs to the UreF family. In terms of assembly, ureD, UreF and UreG form a complex that acts as a GTP-hydrolysis-dependent molecular chaperone, activating the urease apoprotein by helping to assemble the nickel containing metallocenter of UreC. The UreE protein probably delivers the nickel.

It is found in the cytoplasm. In terms of biological role, required for maturation of urease via the functional incorporation of the urease nickel metallocenter. The polypeptide is Urease accessory protein UreF (Photorhabdus laumondii subsp. laumondii (strain DSM 15139 / CIP 105565 / TT01) (Photorhabdus luminescens subsp. laumondii)).